A 341-amino-acid chain; its full sequence is MAEFFATNLWPLLVVIGQSVLLLVILLIAIAYILLADRKIWAAVQIRRGPNVVGPWGLLQSFADLLKFVLKEPTIPDGANKGLFLLAPLVTCVLALAAWAVIPVNAGWVIADINVGVLYILAVSSLSVYGIIMAGWSSNSKYPFLAALRSAAQMVSYEVSIGFVVICVLLCVGSLNLTAIVEAQDGKWGMLGWYWLPLFPMFVVFYVSALAETNRPPFDLVEAESELVAGFMVEYSSTPYLLFMLGEYVAIVTMCAMGTILFLGGWLPPVPYAPFTWVPGIVWFSLKLLFMFFLFAMAKAIVPRYRYDQLMRLGWKVFLPLSLAMVVIVASVLQFADLAPK.

8 helical membrane passes run 13–33, 82–102, 115–135, 161–181, 190–210, 248–268, 277–297, and 313–333; these read LVVIGQSVLLLVILLIAIAYI, GLFLLAPLVTCVLALAAWAVI, VGVLYILAVSSLSVYGIIMAG, IGFVVICVLLCVGSLNLTAIV, MLGWYWLPLFPMFVVFYVSAL, YVAIVTMCAMGTILFLGGWLP, WVPGIVWFSLKLLFMFFLFAM, and LGWKVFLPLSLAMVVIVASVL.

The protein belongs to the complex I subunit 1 family. NDH-1 is composed of 14 different subunits. Subunits NuoA, H, J, K, L, M, N constitute the membrane sector of the complex.

It is found in the cell inner membrane. The catalysed reaction is a quinone + NADH + 5 H(+)(in) = a quinol + NAD(+) + 4 H(+)(out). NDH-1 shuttles electrons from NADH, via FMN and iron-sulfur (Fe-S) centers, to quinones in the respiratory chain. The immediate electron acceptor for the enzyme in this species is believed to be ubiquinone. Couples the redox reaction to proton translocation (for every two electrons transferred, four hydrogen ions are translocated across the cytoplasmic membrane), and thus conserves the redox energy in a proton gradient. This subunit may bind ubiquinone. This chain is NADH-quinone oxidoreductase subunit H 1, found in Rhodopseudomonas palustris (strain ATCC BAA-98 / CGA009).